A 658-amino-acid chain; its full sequence is Transcription factor E2-alpha (658 aa).

Disordered stretches follow at residues 42–82 (STQF…GTHY), 140–191 (SALS…YPAN), 276–313 (NPSV…GTAT), 331–372 (DHSS…SYDG), 460–558 (VPAQ…ERRV), and 628–658 (EEEK…VGHM). A Nuclear localization signal motif is present at residues 173–179 (PKKVRKV). A compositionally biased stretch (polar residues) spans 276–303 (NPSVTSSFSSTPAQYGVSSHTPPISTGD). Positions 333–344 (SSTNFSSTPSTP) are enriched in low complexity. Residues 345-355 (VGSPQGITGSG) are compositionally biased toward polar residues. Residues 493 to 507 (PDIKRESKEDEENRS) are compositionally biased toward basic and acidic residues. A compositionally biased stretch (acidic residues) spans 533–544 (QDEDEDEDDDNL). Basic and acidic residues predominate over residues 548-558 (QKAEREKERRV). The region spanning 555 to 608 (ERRVANNARERLRVKDINEAFKELGRMCQLHLNSEKPQTKLLILHQAVSVILSL) is the bHLH domain.

Homodimer. Heterodimer; efficient DNA binding requires dimerization with another bHLH protein. Interacts with tgfb1i1.

Its subcellular location is the nucleus. Transcriptional regulator involved in the initiation of neuronal differentiation and mesenchymal to epithelial transition. Heterodimers between tcf3 and tissue-specific basic helix-loop-helix (bHLH) proteins play major roles in determining tissue-specific cell fate during embryogenesis, like muscle or early B-cell differentiation. Together with tcf15, required for the mesenchymal to epithelial transition. Dimers bind DNA on E-box motifs: 5'-CANNTG-3'. In Xenopus laevis (African clawed frog), this protein is Transcription factor E2-alpha (tcf3).